Consider the following 173-residue polypeptide: Macro domain-containing protein in gbd 3'region (173 aa).

The Macro domain occupies 1 to 173 (MSGEHLQVVH…NYRLYRERLS (173 aa)).

This sequence belongs to the MacroD-type family.

In Cupriavidus necator (Alcaligenes eutrophus), this protein is Macro domain-containing protein in gbd 3'region.